We begin with the raw amino-acid sequence, 1413 residues long: DNA-directed RNA polymerase subunit beta' (1413 aa).

Zn(2+) contacts are provided by Cys70, Cys72, Cys85, and Cys88. Positions 461, 463, and 465 each coordinate Mg(2+). Cys820, Cys894, Cys901, and Cys904 together coordinate Zn(2+).

This sequence belongs to the RNA polymerase beta' chain family. The RNAP catalytic core consists of 2 alpha, 1 beta, 1 beta' and 1 omega subunit. When a sigma factor is associated with the core the holoenzyme is formed, which can initiate transcription. Requires Mg(2+) as cofactor. Zn(2+) serves as cofactor.

The catalysed reaction is RNA(n) + a ribonucleoside 5'-triphosphate = RNA(n+1) + diphosphate. Functionally, DNA-dependent RNA polymerase catalyzes the transcription of DNA into RNA using the four ribonucleoside triphosphates as substrates. This is DNA-directed RNA polymerase subunit beta' from Cupriavidus metallidurans (strain ATCC 43123 / DSM 2839 / NBRC 102507 / CH34) (Ralstonia metallidurans).